We begin with the raw amino-acid sequence, 341 residues long: UDP-3-O-acylglucosamine N-acyltransferase (341 aa).

The active-site Proton acceptor is His-239.

This sequence belongs to the transferase hexapeptide repeat family. LpxD subfamily. In terms of assembly, homotrimer.

It catalyses the reaction a UDP-3-O-[(3R)-3-hydroxyacyl]-alpha-D-glucosamine + a (3R)-hydroxyacyl-[ACP] = a UDP-2-N,3-O-bis[(3R)-3-hydroxyacyl]-alpha-D-glucosamine + holo-[ACP] + H(+). Its pathway is bacterial outer membrane biogenesis; LPS lipid A biosynthesis. Functionally, catalyzes the N-acylation of UDP-3-O-acylglucosamine using 3-hydroxyacyl-ACP as the acyl donor. Is involved in the biosynthesis of lipid A, a phosphorylated glycolipid that anchors the lipopolysaccharide to the outer membrane of the cell. The sequence is that of UDP-3-O-acylglucosamine N-acyltransferase from Idiomarina loihiensis (strain ATCC BAA-735 / DSM 15497 / L2-TR).